A 95-amino-acid polypeptide reads, in one-letter code: Co-chaperonin GroES (95 aa).

This sequence belongs to the GroES chaperonin family. As to quaternary structure, heptamer of 7 subunits arranged in a ring. Interacts with the chaperonin GroEL.

It localises to the cytoplasm. Functionally, together with the chaperonin GroEL, plays an essential role in assisting protein folding. The GroEL-GroES system forms a nano-cage that allows encapsulation of the non-native substrate proteins and provides a physical environment optimized to promote and accelerate protein folding. GroES binds to the apical surface of the GroEL ring, thereby capping the opening of the GroEL channel. This is Co-chaperonin GroES from Nitratidesulfovibrio vulgaris (strain ATCC 29579 / DSM 644 / CCUG 34227 / NCIMB 8303 / VKM B-1760 / Hildenborough) (Desulfovibrio vulgaris).